The following is a 165-amino-acid chain: Large ribosomal subunit protein uL10 (165 aa).

Belongs to the universal ribosomal protein uL10 family. As to quaternary structure, part of the ribosomal stalk of the 50S ribosomal subunit. The N-terminus interacts with L11 and the large rRNA to form the base of the stalk. The C-terminus forms an elongated spine to which L12 dimers bind in a sequential fashion forming a multimeric L10(L12)X complex.

In terms of biological role, forms part of the ribosomal stalk, playing a central role in the interaction of the ribosome with GTP-bound translation factors. The chain is Large ribosomal subunit protein uL10 from Hamiltonella defensa subsp. Acyrthosiphon pisum (strain 5AT).